Reading from the N-terminus, the 435-residue chain is Trigger factor (435 aa).

The 86-residue stretch at 163-248 (GDFVTFDFKG…IKEIKVKELP (86 aa)) folds into the PPIase FKBP-type domain.

It belongs to the FKBP-type PPIase family. Tig subfamily.

It is found in the cytoplasm. It catalyses the reaction [protein]-peptidylproline (omega=180) = [protein]-peptidylproline (omega=0). Its function is as follows. Involved in protein export. Acts as a chaperone by maintaining the newly synthesized protein in an open conformation. Functions as a peptidyl-prolyl cis-trans isomerase. The chain is Trigger factor from Citrifermentans bemidjiense (strain ATCC BAA-1014 / DSM 16622 / JCM 12645 / Bem) (Geobacter bemidjiensis).